The sequence spans 796 residues: Protein translocase subunit SecA 2 (796 aa).

ATP contacts are provided by residues Gln84, 102 to 106, and Asp496; that span reads GEGKT.

The protein belongs to the SecA family. Monomer and homodimer. Part of the essential Sec protein translocation apparatus which comprises SecA, SecYEG and auxiliary proteins SecDF. Other proteins may also be involved.

The protein localises to the cell membrane. It localises to the cytoplasm. It carries out the reaction ATP + H2O + cellular proteinSide 1 = ADP + phosphate + cellular proteinSide 2.. Its function is as follows. Part of the Sec protein translocase complex. Interacts with the SecYEG preprotein conducting channel. Has a central role in coupling the hydrolysis of ATP to the transfer of proteins into and across the cell membrane, serving as an ATP-driven molecular motor driving the stepwise translocation of polypeptide chains across the membrane. This chain is Protein translocase subunit SecA 2, found in Staphylococcus aureus (strain MSSA476).